The primary structure comprises 379 residues: Bifunctional riboflavin kinase/FMN phosphatase (379 aa).

S2 bears the N-acetylserine mark. The active-site Nucleophile; for FMN phosphatase activity is the D17. 2 residues coordinate Mg(2+): D17 and D19. The Proton donor; for FMN phosphatase activity role is filled by D19. The ATP site is built by G248, K254, T260, and N262. T260 is a Mg(2+) binding site. Catalysis depends on E312, which acts as the Nucleophile; for riboflavin kinase activity. ATP is bound by residues L315, H317, and Y324. The FMN site is built by R337 and F342.

In the N-terminal section; belongs to the HAD-like hydrolase superfamily. CbbY/CbbZ/Gph/YieH family. This sequence in the C-terminal section; belongs to the flavokinase family. Monomer. The cofactor is Mg(2+).

The catalysed reaction is riboflavin + ATP = FMN + ADP + H(+). It catalyses the reaction FMN + H2O = riboflavin + phosphate. It participates in cofactor biosynthesis; FMN biosynthesis; FMN from riboflavin (ATP route): step 1/1. Bifunctional enzyme that catalyzes the hydrolysis of flavin-mononucleotide (FMN) to riboflavin (vitamin B2) and the phosphorylation of riboflavin to form (FMN) coenzyme. The sequence is that of Bifunctional riboflavin kinase/FMN phosphatase from Arabidopsis thaliana (Mouse-ear cress).